The sequence spans 1228 residues: AT-rich interactive domain-containing protein 4B (1228 aa).

Disordered stretches follow at residues 123-167 (LPLT…DDRK) and 266-307 (KTEL…PFPE). Residues serine 276, serine 295, and serine 296 each carry the phosphoserine modification. Residues 277 to 305 (EAEEEEEEEDDEKEKEDNSSEEEEEIEPF) are compositionally biased toward acidic residues. An ARID domain is found at 306-398 (PEERENFLQQ…YLYGFEEYCR (93 aa)). Glycyl lysine isopeptide (Lys-Gly) (interchain with G-Cter in SUMO2) cross-links involve residues lysine 428 and lysine 461. A compositionally biased stretch (basic and acidic residues) spans 437 to 464 (EVNVEDSKNMIPKEETPAEDESERKENI). Disordered regions lie at residues 437–466 (EVNVEDSKNMIPKEETPAEDESERKENIKP), 479–525 (PAQS…EQAR), 539–606 (RPAD…SDTG), 620–802 (LQAS…EEKR), 825–1129 (LNNS…RLPK), and 1168–1204 (SEVASIDRRRKRLKKKERESAATSSSSSSPSSSSITA). The residue at position 482 (serine 482) is a Phosphoserine. A compositionally biased stretch (basic and acidic residues) spans 483–511 (DQEKEANITKLEEKESLEDKDGATARAEE). A compositionally biased stretch (basic residues) spans 546 to 555 (PKIKHRKKIK). Residues 556 to 569 (NKLDKEKDRDEKYS) are compositionally biased toward basic and acidic residues. 3 positions are modified to phosphoserine: serine 579, serine 581, and serine 588. The segment covering 596 to 606 (DLADAKNSDTG) has biased composition (basic and acidic residues). Serine 630 bears the Phosphoserine mark. Basic and acidic residues-rich tracts occupy residues 635 to 667 (ERCAQDPESSSKDESKVEHSAHSRSELISKEEL) and 691 to 700 (SPERLRKDVE). A Glycyl lysine isopeptide (Lys-Gly) (interchain with G-Cter in SUMO2) cross-link involves residue lysine 664. Residues serine 691 and serine 703 each carry the phosphoserine modification. Over residues 701-713 (AISEDTDFEEEDE) the composition is skewed to acidic residues. Phosphothreonine is present on threonine 706. A compositionally biased stretch (basic and acidic residues) spans 721–730 (VKKDTTDKAL). Residues 744-753 (IQTNCLQSGS) show a composition bias toward polar residues. Composition is skewed to basic and acidic residues over residues 755–765 (GKKEDRTKSKE), 825–843 (LNNSDERLQNNRAKDRKDV), and 911–926 (KPVEEKPLEVSDRKTE). Polar residues predominate over residues 927–937 (FPSSGSNSVLN). Serine 930 is modified (phosphoserine). Threonine 942 is modified (phosphothreonine). A compositionally biased stretch (low complexity) spans 944–965 (ESPSSVTVTETSQQQSSVTVSV). The residue at position 945 (serine 945) is a Phosphoserine. The span at 972 to 981 (EEVRSIKSET) shows a compositional bias: basic and acidic residues. Low complexity predominate over residues 1003 to 1017 (SSPAGFNASVSSSSS). Residues 1046–1064 (KKQKRSHKATVVNNKKKGK) are compositionally biased toward basic residues. Phosphothreonine is present on threonine 1066. Residues serine 1068, serine 1069, serine 1071, and serine 1075 each carry the phosphoserine modification. The segment covering 1112–1124 (KNGDKDPDLKEPS) has biased composition (basic and acidic residues). Residues 1141-1186 (ENMTSAERISILQEKLQEIRKHYLSLKSEVASIDRRRKRLKKKERE) are a coiled coil. The segment covering 1188–1204 (AATSSSSSSPSSSSITA) has biased composition (low complexity).

Component of a Sin3A corepressor complex consisting of SIN3A, SAP130, SUDS3/SAP45, SAP180, HDAC1 and HDAC2. Interacts with ARID4A. Interacts with AR.

It localises to the nucleus. Its function is as follows. Acts as a transcriptional repressor. May function in the assembly and/or enzymatic activity of the Sin3A corepressor complex or in mediating interactions between the complex and other regulatory complexes. Plays a role in the regulation of epigenetic modifications at the PWS/AS imprinting center near the SNRPN promoter, where it might function as part of a complex with RB1 and ARID4A. Involved in spermatogenesis, together with ARID4A, where it functions as a transcriptional coactivator for AR (androgen receptor) and enhances expression of genes required for sperm maturation. Regulates expression of the tight junction protein CLDN3 in the testis, which is important for integrity of the blood-testis barrier. Plays a role in myeloid homeostasis where it regulates the histone methylation state of bone marrow cells and expression of various genes involved in hematopoiesis. May function as a leukemia suppressor. The sequence is that of AT-rich interactive domain-containing protein 4B (Arid4b) from Rattus norvegicus (Rat).